The chain runs to 259 residues: Indole-3-glycerol phosphate synthase (259 aa).

This sequence belongs to the TrpC family.

The enzyme catalyses 1-(2-carboxyphenylamino)-1-deoxy-D-ribulose 5-phosphate + H(+) = (1S,2R)-1-C-(indol-3-yl)glycerol 3-phosphate + CO2 + H2O. It participates in amino-acid biosynthesis; L-tryptophan biosynthesis; L-tryptophan from chorismate: step 4/5. The polypeptide is Indole-3-glycerol phosphate synthase (Dehalococcoides mccartyi (strain CBDB1)).